The primary structure comprises 327 residues: Putative HTH-type transcriptional regulatory protein Mevan_1514 (327 aa).

In terms of domain architecture, HTH cro/C1-type spans 128–189; sequence LKETREKLNI…IKGINITDYF (62 aa). Positions 139 to 158 form a DNA-binding region, H-T-H motif; the sequence is VGELAEFSRVSRKTIYKYEQ.

In Methanococcus vannielii (strain ATCC 35089 / DSM 1224 / JCM 13029 / OCM 148 / SB), this protein is Putative HTH-type transcriptional regulatory protein Mevan_1514.